Here is a 940-residue protein sequence, read N- to C-terminus: Valine--tRNA ligase (940 aa).

The 'HIGH' region motif lies at 47 to 57 (PNVTGVLHMGH). The 'KMSKS' region motif lies at 564–568 (KLSKS). Lys567 provides a ligand contact to ATP. The stretch at 873–905 (EEHLLKEKGRLEKERVRLERAVENLERLLGDES) forms a coiled coil.

The protein belongs to the class-I aminoacyl-tRNA synthetase family. ValS type 1 subfamily. Monomer.

Its subcellular location is the cytoplasm. The enzyme catalyses tRNA(Val) + L-valine + ATP = L-valyl-tRNA(Val) + AMP + diphosphate. Functionally, catalyzes the attachment of valine to tRNA(Val). As ValRS can inadvertently accommodate and process structurally similar amino acids such as threonine, to avoid such errors, it has a 'posttransfer' editing activity that hydrolyzes mischarged Thr-tRNA(Val) in a tRNA-dependent manner. This Chlamydia pneumoniae (Chlamydophila pneumoniae) protein is Valine--tRNA ligase.